The primary structure comprises 288 residues: MLDIDKIPADQPVLIAGPTASGKSELALRIAEHSGGVIVNADASQVYDCWRVVTARPSAEDESRAAHALYGHLSYDTLYSAGHWLRDVTPLLKGTKRPIIVGGTGLYFLTLTEGMADIPATPPEVRAEADTLSLETLAADLDPETRARIDMQNRARVQRAWEVLRATGRPLAEWQDDTPPPLLPAKDCTALVVEAERDWLETRIRRRFSMMIAQGALEEARAMQDRYDPALPSCKAIGVPELMAHLSGALTLEQAEERASVATRQYAKRQRTWFRARMKSWQRVSPQA.

17-24 (GPTASGKS) contributes to the ATP binding site. Residue 19-24 (TASGKS) coordinates substrate.

The protein belongs to the IPP transferase family. In terms of assembly, monomer. Mg(2+) is required as a cofactor.

The catalysed reaction is adenosine(37) in tRNA + dimethylallyl diphosphate = N(6)-dimethylallyladenosine(37) in tRNA + diphosphate. Functionally, catalyzes the transfer of a dimethylallyl group onto the adenine at position 37 in tRNAs that read codons beginning with uridine, leading to the formation of N6-(dimethylallyl)adenosine (i(6)A). The protein is tRNA dimethylallyltransferase of Ruegeria sp. (strain TM1040) (Silicibacter sp.).